The sequence spans 93 residues: Small ribosomal subunit protein bS18 (93 aa).

Belongs to the bacterial ribosomal protein bS18 family. As to quaternary structure, part of the 30S ribosomal subunit. Forms a tight heterodimer with protein bS6.

In terms of biological role, binds as a heterodimer with protein bS6 to the central domain of the 16S rRNA, where it helps stabilize the platform of the 30S subunit. The polypeptide is Small ribosomal subunit protein bS18 (Verminephrobacter eiseniae (strain EF01-2)).